The primary structure comprises 60 residues: Large ribosomal subunit protein bL32 (60 aa).

Basic residues predominate over residues 1–23; the sequence is MAKHPVPKKKTSKARRDARRSHH. Residues 1–30 form a disordered region; that stretch reads MAKHPVPKKKTSKARRDARRSHHALTPPTL.

In terms of assembly, part of the 50S ribosomal subunit.

Its function is as follows. Found on the solvent side of the large subunit. The polypeptide is Large ribosomal subunit protein bL32 (rpmF) (Thermus thermophilus (strain ATCC 27634 / DSM 579 / HB8)).